The chain runs to 37 residues: HSQGMFTNDYSKYLEEKRAKEFVEWLKNGESKRQGMS.

Belongs to the glucagon family.

It is found in the secreted. Its function is as follows. Glucagon plays a key role in glucose metabolism and homeostasis. Regulates blood glucose by increasing gluconeogenesis and decreasing glycolysis. The protein is Glucagon-1 of Huso dauricus (Kaluga sturgeon).